We begin with the raw amino-acid sequence, 711 residues long: MGCTVREKHVKPTRRIKAAAFRSDPPLCWVEKIAMSQSIVENLVYHPGLTDSGSVNLNSVTENPEENFWAYCTEEHLEEILLKHLEFLYNQAVSKLLELGYEERVALKAVLSNGHCYGELDVLTNIVNNSLSYLNSGGGGGGSNGNGEDRTETGFTDLRDLEEYSLAGMIYLLQQVKPNLSKGDAMWCLLMSELHVGRASTLDVPTNRSSCCTKEDSNVEDVGTGGTLDIAGFMAPALCRFHGGWGFGNGGGPEFSGNGFSMKGAELKLQREIDCPKRFNLSPSMKSLLKRNVAAFAAGYRASMKQKQIQSSDTIGDSKACNDPAIVKSCGQQPRKSGSEESVSTVLEKFRDLNLDDNLESVGVDDKDCVIVDLLHQVKDFEKKVKERKEWAQKNAMQAAQKVSEELAELKTLSSEREGIQLLKKGKQAVEESTAKRFTDKEIELRKACSQNDRANVIVRKLENQNAEIRAEREGSKLSASESLKACMEASKKEKKCLKKLVAWEKQILKLQDEITAEKEKIKALYKTLAQITEYEKEIEAKWRQEQKAKEEALAQMEEEQRSKEAAEGHNKRKLETLRLKIELDFQRHKDDHQRLEQELGRLKASSDSDSSHISNNAWKPKKSQGENIAKLLEEIDKLEGSYDNEANYDRECIICMKDEVSVVFLPCAHQVVCGSCSDSFFASNNGGSKVTCPCCRGLVQQRIRIFGATS.

Residues 390 to 648 (EWAQKNAMQA…LEGSYDNEAN (259 aa)) adopt a coiled-coil conformation. Disordered stretches follow at residues 552–571 (EALA…EGHN) and 602–622 (RLKA…WKPK). Residues 602–611 (RLKASSDSDS) show a composition bias toward basic and acidic residues. Residues 653–697 (CIICMKDEVSVVFLPCAHQVVCGSCSDSFFASNNGGSKVTCPCCR) form an RING-type zinc finger.

Interacts (via C-terminal domain) with MND1 and HOP2. Interacts with XRI1 (via C-terminal domain).

This chain is MND1-interacting protein 1 (MIP1), found in Arabidopsis thaliana (Mouse-ear cress).